The chain runs to 195 residues: Proline-rich protein 3 (195 aa).

A signal peptide spans 1–29 (MKMNFFNSFPQYGVYILGLNLLLCGVSEG).

Component of the acid-insoluble organic matrix of calcified layers of the shell (at protein level).

The protein localises to the secreted. This Lottia gigantea (Giant owl limpet) protein is Proline-rich protein 3.